Reading from the N-terminus, the 237-residue chain is Phosphatidylserine decarboxylase proenzyme (237 aa).

The active-site Schiff-base intermediate with substrate; via pyruvic acid is the S206. S206 is modified (pyruvic acid (Ser); by autocatalysis).

It belongs to the phosphatidylserine decarboxylase family. PSD-A subfamily. Heterodimer of a large membrane-associated beta subunit and a small pyruvoyl-containing alpha subunit. Requires pyruvate as cofactor. In terms of processing, is synthesized initially as an inactive proenzyme. Formation of the active enzyme involves a self-maturation process in which the active site pyruvoyl group is generated from an internal serine residue via an autocatalytic post-translational modification. Two non-identical subunits are generated from the proenzyme in this reaction, and the pyruvate is formed at the N-terminus of the alpha chain, which is derived from the carboxyl end of the proenzyme. The post-translation cleavage follows an unusual pathway, termed non-hydrolytic serinolysis, in which the side chain hydroxyl group of the serine supplies its oxygen atom to form the C-terminus of the beta chain, while the remainder of the serine residue undergoes an oxidative deamination to produce ammonia and the pyruvoyl prosthetic group on the alpha chain.

The protein resides in the cell membrane. It carries out the reaction a 1,2-diacyl-sn-glycero-3-phospho-L-serine + H(+) = a 1,2-diacyl-sn-glycero-3-phosphoethanolamine + CO2. The protein operates within phospholipid metabolism; phosphatidylethanolamine biosynthesis; phosphatidylethanolamine from CDP-diacylglycerol: step 2/2. Functionally, catalyzes the formation of phosphatidylethanolamine (PtdEtn) from phosphatidylserine (PtdSer). This is Phosphatidylserine decarboxylase proenzyme from Nocardia farcinica (strain IFM 10152).